A 256-amino-acid polypeptide reads, in one-letter code: Transmembrane protein 187 (256 aa).

A run of 7 helical transmembrane segments spans residues 8–28 (ALFHVALASCLCVATVHTGIF), 51–71 (FLAMPFNSLVNMAYVFLGVYW), 94–112 (VFAGMALVYGPVQWLRIGM), 119–139 (VLDQWLTLPIFAWPVAWCLCL), 146–168 (WLFLAVEGLSLCSYSLALLHPHG), 193–213 (NISSGTYLALGVLSCLGFVVL), and 233–253 (FWSKVCDVLQFHFAFLFLTSL).

Its subcellular location is the membrane. This chain is Transmembrane protein 187 (TMEM187), found in Bos taurus (Bovine).